The following is a 563-amino-acid chain: CTP synthase (563 aa).

The interval 1 to 280 (MTKFVFVTGG…DEMICMKLQL (280 aa)) is amidoligase domain. Serine 13 provides a ligand contact to CTP. A UTP-binding site is contributed by serine 13. ATP-binding positions include 14–19 (SLGKGI) and aspartate 71. Mg(2+) is bound by residues aspartate 71 and glutamate 154. Residues 161–163 (DIE), 201–206 (KTKPTQ), and lysine 237 contribute to the CTP site. UTP-binding positions include 201 to 206 (KTKPTQ) and lysine 237. The 253-residue stretch at 305-557 (TIAMAGKYTE…IAAALEHHAA (253 aa)) folds into the Glutamine amidotransferase type-1 domain. Position 366 (glycine 366) interacts with L-glutamine. The Nucleophile; for glutamine hydrolysis role is filled by cysteine 393. Residues 394–397 (LGMQ), glutamate 417, and arginine 483 contribute to the L-glutamine site. Residues histidine 530 and glutamate 532 contribute to the active site.

Belongs to the CTP synthase family. As to quaternary structure, homotetramer.

The enzyme catalyses UTP + L-glutamine + ATP + H2O = CTP + L-glutamate + ADP + phosphate + 2 H(+). It catalyses the reaction L-glutamine + H2O = L-glutamate + NH4(+). The catalysed reaction is UTP + NH4(+) + ATP = CTP + ADP + phosphate + 2 H(+). Its pathway is pyrimidine metabolism; CTP biosynthesis via de novo pathway; CTP from UDP: step 2/2. Its activity is regulated as follows. Allosterically activated by GTP, when glutamine is the substrate; GTP has no effect on the reaction when ammonia is the substrate. The allosteric effector GTP functions by stabilizing the protein conformation that binds the tetrahedral intermediate(s) formed during glutamine hydrolysis. Inhibited by the product CTP, via allosteric rather than competitive inhibition. Catalyzes the ATP-dependent amination of UTP to CTP with either L-glutamine or ammonia as the source of nitrogen. Regulates intracellular CTP levels through interactions with the four ribonucleotide triphosphates. This is CTP synthase from Leptothrix cholodnii (strain ATCC 51168 / LMG 8142 / SP-6) (Leptothrix discophora (strain SP-6)).